The primary structure comprises 427 residues: Protein TIFY 6a (427 aa).

Positions 1–25 are enriched in basic and acidic residues; that stretch reads MERDFLGAIGRKEEAAGKPEEHSDY. Residues 1-33 are disordered; sequence MERDFLGAIGRKEEAAGKPEEHSDYRGGGGGAS. The Tify domain occupies 196–231; sequence QNPKVTQMTIFYDGLVNVFDNIPVEKAQELMLLASR. 2 stretches are compositionally biased toward polar residues: residues 293-303 and 317-327; these read LPKSSSSSNDS and PLSQASPSQPI. Residues 293 to 327 are disordered; the sequence is LPKSSSSSNDSAGPKSGGLPLAVTPLSQASPSQPI. The Jas motif lies at 343 to 367; that stretch reads PQARKASLARFLEKRKERVSSVAPY. The Nuclear localization signal motif lies at 345–352; sequence ARKASLAR. A disordered region spans residues 360-427; it reads RVSSVAPYPS…QEPPSTKLQI (68 aa). 2 stretches are compositionally biased toward polar residues: residues 369–402 and 411–427; these read SSKS…NNCE and RNIS…KLQI.

Belongs to the TIFY/JAZ family. Ubiquitinated.

It localises to the nucleus. Functionally, repressor of jasmonate responses. In Oryza sativa subsp. indica (Rice), this protein is Protein TIFY 6a.